Here is a 703-residue protein sequence, read N- to C-terminus: Harmonin-binding protein USHBP1 (703 aa).

Residues 1 to 15 (MSARATRPRSRRGRH) show a composition bias toward basic residues. Disordered stretches follow at residues 1 to 113 (MSAR…PPGN) and 138 to 172 (HQPP…CQRE). Residues 189–227 (SREDELVRTQASLEAIRAEKETLQKEVQELQDSLLRLEP) adopt a coiled-coil conformation. The segment at 228–256 (CPHLSHNQAGGSGSGSSSSEADREPWETQ) is disordered. A coiled-coil region spans residues 289–309 (EMHIMEAQMEQLRGSIEKLKC). Residues 396-416 (MDAGAQQNPQPSPEGSSVDKP) are disordered. Polar residues predominate over residues 400–410 (AQQNPQPSPEG). A coiled-coil region spans residues 476 to 513 (RLEKTQIQQDLVAAREALADLMLRLQLVRREKRGLELR). Positions 540-583 (AGGANSSGGHSSGGGSSGDEEEWYQGLPAVPGGTSGIDGGQVGR) are disordered. Residues 572–581 (GTSGIDGGQV) show a composition bias toward gly residues. Residues 596–681 (ASLTRTLDLQ…QAEEVAVLEA (86 aa)) adopt a coiled-coil conformation.

Belongs to the MCC family. In terms of assembly, interacts via its C-terminus with the first PDZ domain of USH1C. As to expression, highest level of expression in heart, and moderate to low expression in skeletal muscle, kidney, liver, small intestine, placenta and lung.

In Homo sapiens (Human), this protein is Harmonin-binding protein USHBP1.